The sequence spans 963 residues: MHC class II regulatory factor RFX1 (963 aa).

4 disordered regions span residues 1-88 (MATQ…APSP), 105-126 (ASET…VPTQ), 174-218 (QSPA…GTPA), and 361-392 (SSSE…GSSG). Over residues 20–41 (PQAPPQALPQPPPPAAPQPPAA) the composition is skewed to pro residues. Over residues 42 to 67 (ATPQPQYVTELQSPQPQTQPPGSQKQ) the composition is skewed to low complexity. The residue at position 54 (S54) is a Phosphoserine. Positions 75 to 87 (APAPSQPATPAPS) are enriched in pro residues. Polar residues-rich tracts occupy residues 107–119 (ETVS…STAS), 181–196 (KSGQ…QQVH), and 204–214 (VQANNSTSKTA). Residues 361 to 372 (SSSEAGASNSSV) show a composition bias toward low complexity. Gly residues predominate over residues 373-392 (GAGGNGGGGSSGGGSGGSSG). Residues 423–498 (TVQWLLDNYE…YHYYGLRIKA (76 aa)) constitute a DNA-binding region (RFX-type winged-helix). Residues 899 to 948 (SLNPLDPDKDEEEEEEEESEDELPQDISLAAGSESPALGPEALEPPAKLA) form a disordered region. Residues 906 to 922 (DKDEEEEEEEESEDELP) are compositionally biased toward acidic residues. Low complexity predominate over residues 932-947 (ESPALGPEALEPPAKL). A phosphoserine mark is found at S962 and S963.

Belongs to the RFX family. In terms of assembly, homodimer; binds DNA as a homodimer. Heterodimer; heterodimerizes with RFX2 and RFX3.

It is found in the nucleus. Regulatory factor essential for MHC class II genes expression. Binds to the X boxes of MHC class II genes. This is MHC class II regulatory factor RFX1 (Rfx1) from Mus musculus (Mouse).